We begin with the raw amino-acid sequence, 143 residues long: FAD synthase (143 aa).

ATP is bound by residues 9–10 (TF), 14–17 (HPGH), and Asp-92.

It belongs to the archaeal FAD synthase family. Homodimer. A divalent metal cation is required as a cofactor.

The catalysed reaction is FMN + ATP + H(+) = FAD + diphosphate. The protein operates within cofactor biosynthesis; FAD biosynthesis; FAD from FMN: step 1/1. Its function is as follows. Catalyzes the transfer of the AMP portion of ATP to flavin mononucleotide (FMN) to produce flavin adenine dinucleotide (FAD) coenzyme. The protein is FAD synthase of Methanococcoides burtonii (strain DSM 6242 / NBRC 107633 / OCM 468 / ACE-M).